The following is a 465-amino-acid chain: Cysteine--tRNA ligase (465 aa).

Cysteine 27 serves as a coordination point for Zn(2+). The short motif at 29 to 39 (PTTYNYIHIGN) is the 'HIGH' region element. Cysteine 207, histidine 232, and glutamate 236 together coordinate Zn(2+). Positions 264–268 (KMSKS) match the 'KMSKS' region motif. Lysine 267 provides a ligand contact to ATP.

Belongs to the class-I aminoacyl-tRNA synthetase family. In terms of assembly, monomer. It depends on Zn(2+) as a cofactor.

Its subcellular location is the cytoplasm. The catalysed reaction is tRNA(Cys) + L-cysteine + ATP = L-cysteinyl-tRNA(Cys) + AMP + diphosphate. The protein is Cysteine--tRNA ligase of Carboxydothermus hydrogenoformans (strain ATCC BAA-161 / DSM 6008 / Z-2901).